Here is a 132-residue protein sequence, read N- to C-terminus: uncharacterized protein (132 aa).

The protein belongs to the mycobacterial PPE family.

This is an uncharacterized protein from Mycobacterium tuberculosis (strain ATCC 25618 / H37Rv).